We begin with the raw amino-acid sequence, 133 residues long: Holo-[acyl-carrier-protein] synthase (133 aa).

Positions 8 and 56 each coordinate Mg(2+).

Belongs to the P-Pant transferase superfamily. AcpS family. The cofactor is Mg(2+).

The protein resides in the cytoplasm. It catalyses the reaction apo-[ACP] + CoA = holo-[ACP] + adenosine 3',5'-bisphosphate + H(+). Its function is as follows. Transfers the 4'-phosphopantetheine moiety from coenzyme A to a Ser of acyl-carrier-protein. The chain is Holo-[acyl-carrier-protein] synthase from Clostridium perfringens (strain ATCC 13124 / DSM 756 / JCM 1290 / NCIMB 6125 / NCTC 8237 / Type A).